The primary structure comprises 858 residues: Bifunctional uridylyltransferase/uridylyl-removing enzyme (858 aa).

Residues 1–324 form a uridylyltransferase region; that stretch reads MSASVAEPPP…PATSGVTRVL (324 aa). Positions 325-681 are uridylyl-removing; that stretch reads SPGRFVEKQG…ARPSPVGDAL (357 aa). Residues 443–565 form the HD domain; the sequence is VDQHILMVLR…VGSERRLTAL (123 aa). ACT domains follow at residues 682 to 761 and 790 to 858; these read QVLV…PEPS and ILSV…AIAV.

This sequence belongs to the GlnD family. The cofactor is Mg(2+).

It catalyses the reaction [protein-PII]-L-tyrosine + UTP = [protein-PII]-uridylyl-L-tyrosine + diphosphate. The catalysed reaction is [protein-PII]-uridylyl-L-tyrosine + H2O = [protein-PII]-L-tyrosine + UMP + H(+). Uridylyltransferase (UTase) activity is inhibited by glutamine, while glutamine activates uridylyl-removing (UR) activity. Functionally, modifies, by uridylylation and deuridylylation, the PII regulatory proteins (GlnB and homologs), in response to the nitrogen status of the cell that GlnD senses through the glutamine level. Under low glutamine levels, catalyzes the conversion of the PII proteins and UTP to PII-UMP and PPi, while under higher glutamine levels, GlnD hydrolyzes PII-UMP to PII and UMP (deuridylylation). Thus, controls uridylylation state and activity of the PII proteins, and plays an important role in the regulation of nitrogen assimilation and metabolism. The protein is Bifunctional uridylyltransferase/uridylyl-removing enzyme of Burkholderia mallei (strain ATCC 23344).